Reading from the N-terminus, the 1491-residue chain is Chromosome partition protein MukB (1491 aa).

34 to 41 is a binding site for ATP; it reads GGNGAGKS. Coiled-coil stretches lie at residues 302 to 450, 490 to 600, 781 to 806, 836 to 1109, and 1210 to 1239; these read LIEQ…LKAE, ARSE…RFES, RAAR…AKAS, EQAL…DLRT, and VEAI…ISSD. The segment at 667 to 784 is flexible hinge; it reads PGGSNDPRLK…AIPLFGRAAR (118 aa). Residues 1059 to 1080 form a disordered region; sequence QRRRDELQERLHTSRSRKSEYE.

The protein belongs to the SMC family. MukB subfamily. As to quaternary structure, homodimerization via its hinge domain. Binds to DNA via its C-terminal region. Interacts, and probably forms a ternary complex, with MukE and MukF via its C-terminal region. The complex formation is stimulated by calcium or magnesium. Interacts with tubulin-related protein FtsZ.

It localises to the cytoplasm. Its subcellular location is the nucleoid. In terms of biological role, plays a central role in chromosome condensation, segregation and cell cycle progression. Functions as a homodimer, which is essential for chromosome partition. Involved in negative DNA supercoiling in vivo, and by this means organize and compact chromosomes. May achieve or facilitate chromosome segregation by condensation DNA from both sides of a centrally located replisome during cell division. The chain is Chromosome partition protein MukB from Vibrio cholerae serotype O1 (strain ATCC 39315 / El Tor Inaba N16961).